Reading from the N-terminus, the 88-residue chain is U2-ctenitoxin-Pn1a (88 aa).

The first 17 residues, 1 to 17, serve as a signal peptide directing secretion; it reads MKVAILILSILVLAVAS. A propeptide spanning residues 18-34 is cleaved from the precursor; that stretch reads ETIEEYRDDFAVEELER. 5 disulfide bridges follow: cysteine 37/cysteine 51, cysteine 44/cysteine 57, cysteine 48/cysteine 86, cysteine 50/cysteine 71, and cysteine 59/cysteine 69. A propeptide is located at residue lysine 88.

In terms of tissue distribution, expressed by the venom gland.

The protein resides in the secreted. In terms of biological role, inhibits voltage-gated sodium channels (Nav). Causes scratching, lacrimation, hypersalivation, sweating and agitation followed by spastic paralysis of the anterior and posterior extremities and death at dose levels of 1.62 mg/mouse. Insecticidal to the larval and adult forms of the house fly. The sequence is that of U2-ctenitoxin-Pn1a from Phoneutria nigriventer (Brazilian armed spider).